We begin with the raw amino-acid sequence, 116 residues long: Large ribosomal subunit protein uL18 (116 aa).

It belongs to the universal ribosomal protein uL18 family. In terms of assembly, part of the 50S ribosomal subunit; part of the 5S rRNA/L5/L18/L25 subcomplex. Contacts the 5S and 23S rRNAs.

Its function is as follows. This is one of the proteins that bind and probably mediate the attachment of the 5S RNA into the large ribosomal subunit, where it forms part of the central protuberance. The sequence is that of Large ribosomal subunit protein uL18 from Saccharophagus degradans (strain 2-40 / ATCC 43961 / DSM 17024).